A 551-amino-acid polypeptide reads, in one-letter code: MDRRRFIKGSMAMAAVCGTSGIASLFSQAAFAADSDIADGQTQRFDFSILQSMAHDLAQTAWRGAPRPLPDTLATMTPQAYNSIQYDAEKSLWHNVENRQLDAQFFHMGMGFRRRVRMFSVDPATHLAREIHFRPELFKYNDAGVDTKQLEGQSDLGFAGFRVFKAPELARRDVVSFLGASYFRAVDDTYQYGLSARGLAIDTYTDSKEEFPDFTAFWFDTVKPGATTFTVYALLDSASITGAYKFTIHCEKSQVIMDVENHLYARKDIKQLGIAPMTSMFSCGTNERRMCDTIHPQIHDSDRLSMWRGNGEWICRPLNNPQKLQFNAYTDNNPKGFGLLQLDRDFSHYQDIMGWYNKRPSLWVEPRNKWGKGTIGLMEIPTTGETLDNIVCFWQPEKAVKAGDEFAFQYRLYWSAQPPVHCPLARVMATRTGMGGFPEGWAPGEHYPEKWARRFAVDFVGGDLKAAAPKGIEPVITLSSGEAKQIEILYIEPIDGYRIQFDWYPTSDSTDPVDMRMYLRCQGDAISETWLYQYFPPAPDKRQYVDDRVMS.

A signal peptide (tat-type signal) is located at residues 1–32 (MDRRRFIKGSMAMAAVCGTSGIASLFSQAAFA).

Belongs to the OpgD/OpgG family. Predicted to be exported by the Tat system. The position of the signal peptide cleavage has not been experimentally proven.

The protein localises to the periplasm. It functions in the pathway glycan metabolism; osmoregulated periplasmic glucan (OPG) biosynthesis. Probably involved in the control of the structural glucose backbone of osmoregulated periplasmic glucans (OPGs). This chain is Glucans biosynthesis protein D, found in Escherichia coli O139:H28 (strain E24377A / ETEC).